A 91-amino-acid polypeptide reads, in one-letter code: Acylphosphatase (91 aa).

The 89-residue stretch at 3–91 (HIKVNVKGQV…TELTKFEVKY (89 aa)) folds into the Acylphosphatase-like domain. Active-site residues include Arg-18 and Asn-36.

Belongs to the acylphosphatase family.

It carries out the reaction an acyl phosphate + H2O = a carboxylate + phosphate + H(+). This chain is Acylphosphatase (acyP), found in Oceanobacillus iheyensis (strain DSM 14371 / CIP 107618 / JCM 11309 / KCTC 3954 / HTE831).